We begin with the raw amino-acid sequence, 574 residues long: Phosphatidylinositol 4-kinase gamma 3 (574 aa).

2 consecutive Ubiquitin-like domains span residues 32–109 and 110–188; these read PILV…SDLQ and AISV…AKVR. Positions 257-555 constitute a PI3K/PI4K catalytic domain; sequence GNGPIRSSDG…IVPTETTEDE (299 aa). Positions 263–269 are G-loop; the sequence is SSDGSGG. Residues 264 to 270, Lys286, and 381 to 384 contribute to the ATP site; these read SDGSGGA and QMFV. Residues 414-422 form a catalytic loop region; that stretch reads ANADRHAGN. An activation loop region spans residues 438-464; it reads PIDHGYCFPNKFEDCTFEWLYWPQAKE. An ATP-binding site is contributed by Asp440.

The protein belongs to the PI3/PI4-kinase family. Type II PI4K subfamily.

The catalysed reaction is a 1,2-diacyl-sn-glycero-3-phospho-(1D-myo-inositol) + ATP = a 1,2-diacyl-sn-glycero-3-phospho-(1D-myo-inositol 4-phosphate) + ADP + H(+). Functionally, the phosphorylation of phosphatidylinositol (PI) to PI4P is the first committed step in the generation of phosphatidylinositol 4,5-bisphosphate (PIP2), a precursor of the second messenger inositol 1,4,5-trisphosphate (InsP3). The chain is Phosphatidylinositol 4-kinase gamma 3 (PI4KG3) from Arabidopsis thaliana (Mouse-ear cress).